Reading from the N-terminus, the 335-residue chain is LIM and SH3 domain protein F42H10.3 (335 aa).

The LIM zinc-binding domain occupies 5-65; that stretch reads CAREDCGKTV…DPHYPKTVAS (61 aa). 2 Nebulin repeats span residues 66-97 and 98-132; these read VMAD…KMKG and TKIE…QKAR. The span at 128–142 shows a compositional bias: basic and acidic residues; it reads DQKARQEEVRPKEEI. 2 disordered regions span residues 128 to 151 and 233 to 264; these read DQKA…PTPI and DFAG…ISPT. Over residues 242-260 the composition is skewed to low complexity; that stretch reads SNSISSTSPHSTLSSPQST. An SH3 domain is found at 266–327; that stretch reads KAGFAVKAIY…PANYVQPHKL (62 aa).

The chain is LIM and SH3 domain protein F42H10.3 from Caenorhabditis elegans.